Consider the following 83-residue polypeptide: Small ribosomal subunit protein bS16 (83 aa).

It belongs to the bacterial ribosomal protein bS16 family.

This is Small ribosomal subunit protein bS16 from Pseudoalteromonas atlantica (strain T6c / ATCC BAA-1087).